Here is a 144-residue protein sequence, read N- to C-terminus: Universal stress protein F (144 aa).

The protein belongs to the universal stress protein A family. Homodimer.

The polypeptide is Universal stress protein F (uspF) (Escherichia coli O157:H7).